The following is a 452-amino-acid chain: Sodium-coupled neutral amino acid transporter 7 (452 aa).

11 consecutive transmembrane segments (helical) span residues 46–66 (AVFIVVNAALGAGLLNFPAAF), 74–94 (AAISLQLVLLLFIISGLVILA), 120–140 (LCEVLIAVYTFGTCIAFFIII), 168–188 (FTISVTGVLLILPLSLPREIS), 195–215 (FLSVLGTCYVTVVVVVRCIWP), 234–256 (VFNAVPTICFGYQCHVSSVPVYG), 272–292 (IAMFIALCVYTGTGVCGFLLF), 309–329 (IAVAVARAFIILCVLTSYPIL), 361–381 (VLQTVIWFLLTLLLALFIPDI), 385–405 (ISLIGGLAACFIFIFPGLCLI), and 419–439 (SWWALLSYGVIMVTIGTFIFG).

It belongs to the amino acid/polyamine transporter 2 family.

It is found in the lysosome membrane. It localises to the cell projection. Its subcellular location is the axon. The enzyme catalyses L-asparagine(in) + Na(+)(in) = L-asparagine(out) + Na(+)(out). It carries out the reaction L-glutamine(in) + Na(+)(in) = L-glutamine(out) + Na(+)(out). Symporter that selectively cotransports sodium ions and amino acids, such as L-glutamine and L-asparagine from the lysosome into the cytoplasm and may participates in mTORC1 activation. The transport activity requires an acidic lysosomal lumen. This is Sodium-coupled neutral amino acid transporter 7 from Xenopus laevis (African clawed frog).